The primary structure comprises 119 residues: MPRVKGGTVTRKRRKKVLKLAKGYFGSKHTLYKVANQQVMKSGNYAFRDRRQKKRDFRKLWITRINAAARMNGLSYSRLMHGLKLSGIEVNRKMLADLAVNDLTAFNQLADAAKAQLNK.

It belongs to the bacterial ribosomal protein bL20 family. As to quaternary structure, part of the 50S ribosomal subunit.

Functionally, binds directly to 23S ribosomal RNA and is necessary for the in vitro assembly process of the 50S ribosomal subunit. It is not involved in the protein synthesizing functions of that subunit. The protein is Large ribosomal subunit protein bL20 (rplT) of Bacillus subtilis (strain 168).